Here is a 62-residue protein sequence, read N- to C-terminus: Sperm histone P2a (62 aa).

Belongs to the protamine P2 family. In terms of processing, proteolytic processing into mature chains is required for histone eviction during spermatogenesis. Transition proteins (TNP1 and TNP2) are required for processing. As to expression, testis.

The protein resides in the nucleus. Its subcellular location is the chromosome. In terms of biological role, protamines substitute for histones in the chromatin of sperm during the haploid phase of spermatogenesis. They compact sperm DNA into a highly condensed, stable and inactive complex. The sequence is that of Sperm histone P2a from Equus caballus (Horse).